Here is a 107-residue protein sequence, read N- to C-terminus: Protein Rev (107 aa).

S5 carries the post-translational modification Phosphoserine; by host CK2. The segment at 18 to 26 (AIKILYQSN) is homomultimerization. Disordered regions lie at residues 24–48 (QSNP…WRAR) and 82–107 (HLDC…VGRS). The short motif at 34 to 50 (TRQARRNRRRRWRARQR) is the Nuclear localization signal and RNA-binding (RRE) element. Residues 36–48 (QARRNRRRRWRAR) show a composition bias toward basic residues. The short motif at 73–84 (LQLPPLERLHLD) is the Nuclear export signal and binding to XPO1 element. A compositionally biased stretch (polar residues) spans 88–101 (DSGTSGTQQPQGTE). The residue at position 92 (S92) is a Phosphoserine; by host.

It belongs to the HIV-1 REV protein family. Homomultimer; when bound to the RRE. Multimeric assembly is essential for activity and may involve XPO1. Binds to human KPNB1, XPO1, TNPO1, RANBP5 and IPO7. Interacts with the viral Integrase. Interacts with human KHDRBS1. Interacts with human NAP1; this interaction decreases Rev multimerization and stimulates its activity. Interacts with human DEAD-box helicases DDX3 and DDX24; these interactions may serve for viral RNA export to the cytoplasm and packaging, respectively. Interacts with human PSIP1; this interaction may inhibit HIV-1 DNA integration by promoting dissociation of the Integrase-LEDGF/p75 complex. In terms of processing, asymmetrically arginine dimethylated at one site by host PRMT6. Methylation impairs the RNA-binding activity and export of viral RNA from the nucleus to the cytoplasm. Phosphorylated by protein kinase CK2. Presence of, and maybe binding to the N-terminus of the regulatory beta subunit of CK2 is necessary for CK2-mediated Rev's phosphorylation.

Its subcellular location is the host nucleus. It is found in the host nucleolus. It localises to the host cytoplasm. In terms of biological role, escorts unspliced or incompletely spliced viral pre-mRNAs (late transcripts) out of the nucleus of infected cells. These pre-mRNAs carry a recognition sequence called Rev responsive element (RRE) located in the env gene, that is not present in fully spliced viral mRNAs (early transcripts). This function is essential since most viral proteins are translated from unspliced or partially spliced pre-mRNAs which cannot exit the nucleus by the pathway used by fully processed cellular mRNAs. Rev itself is translated from a fully spliced mRNA that readily exits the nucleus. Rev's nuclear localization signal (NLS) binds directly to KPNB1/Importin beta-1 without previous binding to KPNA1/Importin alpha-1. KPNB1 binds to the GDP bound form of RAN (Ran-GDP) and targets Rev to the nucleus. In the nucleus, the conversion from Ran-GDP to Ran-GTP dissociates Rev from KPNB1 and allows Rev's binding to the RRE in viral pre-mRNAs. Rev multimerization on the RRE via cooperative assembly exposes its nuclear export signal (NES) to the surface. Rev can then form a complex with XPO1/CRM1 and Ran-GTP, leading to nuclear export of the complex. Conversion from Ran-GTP to Ran-GDP mediates dissociation of the Rev/RRE/XPO1/RAN complex, so that Rev can return to the nucleus for a subsequent round of export. Beside KPNB1, also seems to interact with TNPO1/Transportin-1, RANBP5/IPO5 and IPO7/RANBP7 for nuclear import. The nucleoporin-like HRB/RIP is an essential cofactor that probably indirectly interacts with Rev to release HIV RNAs from the perinuclear region to the cytoplasm. In Human immunodeficiency virus type 1 group M subtype G (isolate SE6165) (HIV-1), this protein is Protein Rev.